The following is a 753-amino-acid chain: Elongin-A2 (753 aa).

Residues 5 to 80 form the TFIIS N-terminal domain; that stretch reads STTLHAVEKL…ARWKKLVLVD (76 aa). Disordered regions lie at residues 80-245, 261-453, and 477-497; these read DRNT…DWHS, ETPR…GPKT, and LSDSDSMTSQAKPEALSSPKF. 2 stretches are compositionally biased toward basic and acidic residues: residues 147-157 and 271-285; these read HSREPRAERKC and ARDRQPSDFKTDKEG. Over residues 306 to 317 the composition is skewed to basic residues; that stretch reads KRPQHSHSNKKR. The segment covering 333-348 has biased composition (basic and acidic residues); sequence SPEEKEQLSNDRETQE. The span at 366 to 377 shows a compositional bias: acidic residues; the sequence is EVEEVDMAEEFE. The segment covering 409–428 has biased composition (basic and acidic residues); that stretch reads DKQRKANESKGTRESWDSAK. The tract at residues 500–659 is activation domain; the sequence is EAAFPGRRVN…TPYDTSRRQE (160 aa). The BC-box stretch occupies residues 528 to 537; sequence TLRQQCAQVL. Positions 528–537 are interacting with Elongin BC complex; sequence TLRQQCAQVL. The segment at 650–735 is disordered; sequence TPYDTSRRQE…KTRKQAAKKV (86 aa). Positions 654-663 are enriched in basic and acidic residues; that stretch reads TSRRQEKSAG. The segment covering 680 to 700 has biased composition (low complexity); it reads GSSHTPSSQSSSGGGRDSSSS.

In terms of assembly, heterotrimer of an A (ELOA, ELOA2 or ELOA3P), ELOB and ELOC subunit. In terms of tissue distribution, specifically expressed in testis.

The protein localises to the nucleus. Functionally, SIII, also known as elongin, is a general transcription elongation factor that increases the RNA polymerase II transcription elongation past template-encoded arresting sites. Subunit A2 is transcriptionally active but its transcription activity is not enhanced by binding to the dimeric complex of the SIII regulatory subunits B and C (elongin BC complex). The polypeptide is Elongin-A2 (Homo sapiens (Human)).